Here is a 395-residue protein sequence, read N- to C-terminus: Elongation factor Tu (395 aa).

Positions Lys10 to Gln204 constitute a tr-type G domain. Residues Gly19–Thr26 form a G1 region. Gly19–Thr26 lines the GTP pocket. Thr26 provides a ligand contact to Mg(2+). The G2 stretch occupies residues Gly60 to Asn64. Positions Asp81–Gly84 are G3. Residues Asp81 to His85 and Asn136 to Asp139 contribute to the GTP site. Residues Asn136–Asp139 are G4. Residues Ser174–Leu176 are G5.

This sequence belongs to the TRAFAC class translation factor GTPase superfamily. Classic translation factor GTPase family. EF-Tu/EF-1A subfamily. As to quaternary structure, monomer.

The protein resides in the cytoplasm. The catalysed reaction is GTP + H2O = GDP + phosphate + H(+). Its function is as follows. GTP hydrolase that promotes the GTP-dependent binding of aminoacyl-tRNA to the A-site of ribosomes during protein biosynthesis. This Symbiobacterium thermophilum (strain DSM 24528 / JCM 14929 / IAM 14863 / T) protein is Elongation factor Tu.